The chain runs to 282 residues: B3 domain-containing protein At5g06250 (282 aa).

The segment at residues 46-159 (FEKSLTPSDV…RLFIGWRRRG (114 aa)) is a DNA-binding region (TF-B3).

The protein resides in the nucleus. This is B3 domain-containing protein At5g06250 from Arabidopsis thaliana (Mouse-ear cress).